A 259-amino-acid polypeptide reads, in one-letter code: Probable dihydroorotate dehydrogenase B (NAD(+)), electron transfer subunit (259 aa).

The region spanning 1–89 (MLPLNATITQ…RGPFGKGFTL (89 aa)) is the FAD-binding FR-type domain. Residues Cys211, Cys216, Cys219, and Cys229 each contribute to the [2Fe-2S] cluster site.

The protein belongs to the PyrK family. As to quaternary structure, heterotetramer of 2 PyrK and 2 PyrD type B subunits. It depends on [2Fe-2S] cluster as a cofactor. Requires FAD as cofactor.

The protein operates within pyrimidine metabolism; UMP biosynthesis via de novo pathway; orotate from (S)-dihydroorotate (NAD(+) route): step 1/1. In terms of biological role, responsible for channeling the electrons from the oxidation of dihydroorotate from the FMN redox center in the PyrD type B subunit to the ultimate electron acceptor NAD(+). This chain is Probable dihydroorotate dehydrogenase B (NAD(+)), electron transfer subunit, found in Methanosarcina mazei (strain ATCC BAA-159 / DSM 3647 / Goe1 / Go1 / JCM 11833 / OCM 88) (Methanosarcina frisia).